The sequence spans 270 residues: 4-hydroxy-tetrahydrodipicolinate reductase (270 aa).

NAD(+) contacts are provided by residues 8–13 (GAAGRM) and glutamate 34. Residue arginine 35 coordinates NADP(+). NAD(+)-binding positions include 98 to 100 (GST) and 122 to 125 (SPNM). Residue histidine 155 is the Proton donor/acceptor of the active site. Histidine 156 provides a ligand contact to (S)-2,3,4,5-tetrahydrodipicolinate. The active-site Proton donor is the lysine 159. 165-166 (GT) contacts (S)-2,3,4,5-tetrahydrodipicolinate.

It belongs to the DapB family.

The protein localises to the cytoplasm. The enzyme catalyses (S)-2,3,4,5-tetrahydrodipicolinate + NAD(+) + H2O = (2S,4S)-4-hydroxy-2,3,4,5-tetrahydrodipicolinate + NADH + H(+). It catalyses the reaction (S)-2,3,4,5-tetrahydrodipicolinate + NADP(+) + H2O = (2S,4S)-4-hydroxy-2,3,4,5-tetrahydrodipicolinate + NADPH + H(+). The protein operates within amino-acid biosynthesis; L-lysine biosynthesis via DAP pathway; (S)-tetrahydrodipicolinate from L-aspartate: step 4/4. Its function is as follows. Catalyzes the conversion of 4-hydroxy-tetrahydrodipicolinate (HTPA) to tetrahydrodipicolinate. This chain is 4-hydroxy-tetrahydrodipicolinate reductase, found in Anaeromyxobacter dehalogenans (strain 2CP-C).